The chain runs to 416 residues: Squalene synthase (416 aa).

2 helical membrane-spanning segments follow: residues 285–304 (VINF…NACY) and 386–406 (FISY…FLIA).

This sequence belongs to the phytoene/squalene synthase family. Requires Mg(2+) as cofactor.

The protein resides in the endoplasmic reticulum membrane. It catalyses the reaction 2 (2E,6E)-farnesyl diphosphate + NADPH + H(+) = squalene + 2 diphosphate + NADP(+). The catalysed reaction is 2 (2E,6E)-farnesyl diphosphate + NADH + H(+) = squalene + 2 diphosphate + NAD(+). Its pathway is terpene metabolism; lanosterol biosynthesis; lanosterol from farnesyl diphosphate: step 1/3. This is Squalene synthase (fdfT) from Dictyostelium discoideum (Social amoeba).